The sequence spans 185 residues: MDNFEQVLNALQQGEVIAYPTEGVFGVGCDPDNPDAIQKLLDLKQRPVEKGLILIAASYEQLLPYIDESQLTPEQLATVHATWPGPYTWIMPASDKVSNWVSGQFDSIAVRVTDHPLVQKMCNAFGKPLTSTSANLSGLPPCMTTEEVEQQLGDKLVAILRGETSGRDKPSEIRDAKTSQILRQG.

The region spanning 1–185 is the YrdC-like domain; it reads MDNFEQVLNA…AKTSQILRQG (185 aa). Positions 163-185 are disordered; sequence ETSGRDKPSEIRDAKTSQILRQG. Over residues 164-177 the composition is skewed to basic and acidic residues; it reads TSGRDKPSEIRDAK.

This sequence belongs to the SUA5 family. TsaC subfamily.

It is found in the cytoplasm. It carries out the reaction L-threonine + hydrogencarbonate + ATP = L-threonylcarbamoyladenylate + diphosphate + H2O. Required for the formation of a threonylcarbamoyl group on adenosine at position 37 (t(6)A37) in tRNAs that read codons beginning with adenine. Catalyzes the conversion of L-threonine, HCO(3)(-)/CO(2) and ATP to give threonylcarbamoyl-AMP (TC-AMP) as the acyladenylate intermediate, with the release of diphosphate. This chain is Threonylcarbamoyl-AMP synthase, found in Vibrio parahaemolyticus serotype O3:K6 (strain RIMD 2210633).